The following is a 1187-amino-acid chain: MDVDAEEKRHRTRSKGVRVPVEPAIQELFSCPTPGCDGSGHVSGKYARHRSVYGCPLAKKRKTQDKQPQEPAPKRKPFAVKADSSSVDECYESDGTEDMDDKEEDDDEEFSEDNDEQGDDDDEDEVDREDEEEIEEEDDEDDEDDDDGDDVEEEEDDDDEEEEEEEEEEENEDHQMSCTRIMQDPEKDDNNNDEYDNYDELVAKSLLNLGKIAEDAAYRARTESEMNSNTSNSLEDDSDKNENLGRKSELSLDLDSDVVRETVDSLKLLAQGHGVVLSENISDRSYAEGMSQQDSRNMNYVMLGKPMNNGLMEKMVEESDEEVCLSSLECLRNQCFDLARKLSETNPQDRSQPPNMSVRQHVRQEDDFPGRTPDRSYSDMMNLMRLEEQLSPRSRTFSSCAKEDGCHERDDDTTSVNSDRSEEVFDMTKGNLTLLEKAIALETERAKAMREKMAMDAGRRDNLRSYEDQSPRQLAGEDRKSKSSDSHVKKPYYDPSRTEKRESKCPTPGCDGTGHVTGLYPHHRSLSGCPHKDRVPPEILAMHENVLKCPTPGCTGRGHVNSNRNSHRSLSGCPIAAAEKLAKAQEKHQSCDVSKSNQASDRVLRPMCFVKQLEIPQYGYRNNVPTTTPRSNLAKELEKYSKTSFEYNSYDNHTYGKRAIAPKVQTRDISPKGYDDAKRYCKNASPSSSTTSSYAPSSSSNLSCGGGSSASSTCSKSSFDYTHDMEAAHMAATAILNLSTRCREMPQNLSTKPQDLCTARNPDMEVDENGTLDLSMNKQRPRDSCCPVLTPLEPMSPQQQAVMSSRCFQLSEGDCWDLPVDYTKMKPRRVDEEDPKEITPEDLDPFQEALEERRYPGEVTIPSPKPKYPQCKESKKDLITLSGCPLADKSIRSMLATSSQELKCPTPGCDGSGHITGNYASHRSLSGCPRAKKSGIRIAQSKEDKEDQEPIRCPVPGCDGQGHITGKYASHRSASGCPLAAKRQKDGYLNGSQFSWKSVKTEGMSCPTPGCDGSGHVSGSFLTHRSLSGCPRATSAMKKAKLSGEQMLTIKQRASNGIENDEEIKQLDEEIKELNESNSQMEADMIKLRTQVTITTMESNLKTIEEENKVIEQQNESLLHELANLSQSLIHSLANIQLPHMDPINEQNFDAYVTTLTEMYTNQDRYQSPENKALLENIKQAVRGIQV.

Residues 1-20 (MDVDAEEKRHRTRSKGVRVP) form a disordered region. Residues 22–65 (EPAIQELFSCPTPGCDGSGHVSGKYARHRSVYGCPLAKKRKTQD) form a CCHHC-type 1 zinc finger. Zn(2+) is bound by residues cysteine 31, cysteine 36, histidine 49, and cysteine 55. Disordered regions lie at residues 56 to 178 (PLAK…QMSC) and 221 to 248 (RTESEMNSNTSNSLEDDSDKNENLGRKS). Residues 89–172 (ECYESDGTED…EEEEEEEENE (84 aa)) are compositionally biased toward acidic residues. Serine 251 is subject to Phosphoserine. 2 disordered regions span residues 343–422 (SETN…DRSE) and 450–509 (REKM…PTPG). The segment covering 344 to 358 (ETNPQDRSQPPNMSV) has biased composition (polar residues). Basic and acidic residues-rich tracts occupy residues 362 to 377 (VRQEDDFPGRTPDRSY), 401 to 412 (AKEDGCHERDDD), and 450 to 504 (REKM…RESK). 2 consecutive CCHHC-type zinc fingers follow at residues 496–539 (SRTE…PPEI) and 540–583 (LAMH…KLAK). Residues cysteine 505, cysteine 510, histidine 523, cysteine 529, cysteine 549, cysteine 554, histidine 567, and cysteine 573 each contribute to the Zn(2+) site. The segment at 684 to 708 (ASPSSSTTSSYAPSSSSNLSCGGGS) is disordered. CCHHC-type zinc fingers lie at residues 895–938 (LATS…GIRI), 944–987 (DKED…QKDG), and 997–1040 (KSVK…MKKA). Positions 904, 909, 922, 928, 953, 958, 971, 977, 1006, 1011, 1024, and 1030 each coordinate Zn(2+). The stretch at 1055-1131 (SNGIENDEEI…LANLSQSLIH (77 aa)) forms a coiled coil.

It belongs to the MYT1 family. In terms of assembly, interacts with SIN3B. In terms of tissue distribution, brain, testis and pituitary gland. Expression is higher in the brain than in the testis and pituitary gland. Highest level expression seen in the developing CNS.

The protein resides in the nucleus. Its subcellular location is the chromosome. In terms of biological role, transcription factor that plays a key role in neuronal differentiation. Acts by specifically repressing expression of non-neuronal genes during neuron differentiation. In contrast to other transcription repressors that inhibit specific lineages, mediates repression of multiple differentiation programs. Also represses expression of negative regulators of neurogenesis, such as members of the Notch signaling pathway, including HES1. The combination of three transcription factors, ASCL1, POU3F2/BRN2 and MYT1L, is sufficient to reprogram fibroblasts and other somatic cells into induced neuronal (iN) cells in vitro. Directly binds the 5'-AAGTT-3' core motif present on the promoter of target genes and represses transcription by recruiting a multiprotein complex containing SIN3B. The 5'-AAGTT-3' core motif is absent from the promoter of neural genes. This Rattus norvegicus (Rat) protein is Myelin transcription factor 1-like protein (Myt1l).